Here is a 491-residue protein sequence, read N- to C-terminus: Aspartyl/glutamyl-tRNA(Asn/Gln) amidotransferase subunit B (491 aa).

It belongs to the GatB/GatE family. GatB subfamily. As to quaternary structure, heterotrimer of A, B and C subunits.

The catalysed reaction is L-glutamyl-tRNA(Gln) + L-glutamine + ATP + H2O = L-glutaminyl-tRNA(Gln) + L-glutamate + ADP + phosphate + H(+). The enzyme catalyses L-aspartyl-tRNA(Asn) + L-glutamine + ATP + H2O = L-asparaginyl-tRNA(Asn) + L-glutamate + ADP + phosphate + 2 H(+). In terms of biological role, allows the formation of correctly charged Asn-tRNA(Asn) or Gln-tRNA(Gln) through the transamidation of misacylated Asp-tRNA(Asn) or Glu-tRNA(Gln) in organisms which lack either or both of asparaginyl-tRNA or glutaminyl-tRNA synthetases. The reaction takes place in the presence of glutamine and ATP through an activated phospho-Asp-tRNA(Asn) or phospho-Glu-tRNA(Gln). In Prochlorococcus marinus (strain NATL1A), this protein is Aspartyl/glutamyl-tRNA(Asn/Gln) amidotransferase subunit B.